A 217-amino-acid chain; its full sequence is Kunitz-type trypsin inhibitor-like 2 protein (217 aa).

The N-terminal stretch at 1–26 (MKPLSPLTLSFLLFVFITTLSLAFSN) is a signal peptide. 2 disulfide bridges follow: Cys70-Cys115 and Cys168-Cys175. A glycan (N-linked (GlcNAc...) asparagine) is linked at Asn191.

This sequence belongs to the protease inhibitor I3 (leguminous Kunitz-type inhibitor) family.

The protein localises to the secreted. In terms of biological role, might act as a protease inhibitor involved in plant defense responses. The sequence is that of Kunitz-type trypsin inhibitor-like 2 protein (PIP20-2) from Pisum sativum (Garden pea).